The chain runs to 131 residues: Small ribosomal subunit protein uS8 (131 aa).

Belongs to the universal ribosomal protein uS8 family. Part of the 30S ribosomal subunit. Contacts proteins S5 and S12.

Its function is as follows. One of the primary rRNA binding proteins, it binds directly to 16S rRNA central domain where it helps coordinate assembly of the platform of the 30S subunit. In Chlorobaculum tepidum (strain ATCC 49652 / DSM 12025 / NBRC 103806 / TLS) (Chlorobium tepidum), this protein is Small ribosomal subunit protein uS8.